The chain runs to 315 residues: Type II methyltransferase M.Bsp6I (315 aa).

An SAM-dependent MTase C5-type domain is found at 2–315 (LQIASLFAGV…IAENIYKSML (314 aa)). The active site involves cysteine 73.

The protein belongs to the class I-like SAM-binding methyltransferase superfamily. C5-methyltransferase family.

It carries out the reaction a 2'-deoxycytidine in DNA + S-adenosyl-L-methionine = a 5-methyl-2'-deoxycytidine in DNA + S-adenosyl-L-homocysteine + H(+). In terms of biological role, a methylase that recognizes the double-stranded sequence 5'-GCNGC-3', methylates C-? on both strands, and protects the DNA from cleavage by the Bsp6I endonuclease. The chain is Type II methyltransferase M.Bsp6I from Bacillus sp. (strain RFL6).